The primary structure comprises 161 residues: Large ribosomal subunit protein uL15 (161 aa).

Residues 1–43 (MKLSEISDNPGARKKRMRIGRGIGSGKGKTGGRGGKGQTARSG) are disordered. Residues 21 to 37 (RGIGSGKGKTGGRGGKG) are compositionally biased toward gly residues.

It belongs to the universal ribosomal protein uL15 family. As to quaternary structure, part of the 50S ribosomal subunit.

Its function is as follows. Binds to the 23S rRNA. This Rhodopseudomonas palustris (strain HaA2) protein is Large ribosomal subunit protein uL15.